Reading from the N-terminus, the 317-residue chain is Glycerol-3-phosphate dehydrogenase [NAD(P)+] (317 aa).

Tryptophan 20, arginine 40, arginine 41, and lysine 88 together coordinate NADPH. Sn-glycerol 3-phosphate contacts are provided by lysine 88 and glycine 116. Serine 120 provides a ligand contact to NADPH. Residues lysine 171, aspartate 224, serine 234, arginine 235, and asparagine 236 each contribute to the sn-glycerol 3-phosphate site. Catalysis depends on lysine 171, which acts as the Proton acceptor. Arginine 235 contributes to the NADPH binding site. Glutamate 261 provides a ligand contact to NADPH.

Belongs to the NAD-dependent glycerol-3-phosphate dehydrogenase family.

Its subcellular location is the cytoplasm. It catalyses the reaction sn-glycerol 3-phosphate + NAD(+) = dihydroxyacetone phosphate + NADH + H(+). It carries out the reaction sn-glycerol 3-phosphate + NADP(+) = dihydroxyacetone phosphate + NADPH + H(+). It functions in the pathway membrane lipid metabolism; glycerophospholipid metabolism. Functionally, catalyzes the reduction of the glycolytic intermediate dihydroxyacetone phosphate (DHAP) to sn-glycerol 3-phosphate (G3P), the key precursor for phospholipid synthesis. The protein is Glycerol-3-phosphate dehydrogenase [NAD(P)+] of Synechocystis sp. (strain ATCC 27184 / PCC 6803 / Kazusa).